The sequence spans 514 residues: ATP synthase subunit alpha (514 aa).

170–177 provides a ligand contact to ATP; it reads GDRQIGKT.

It belongs to the ATPase alpha/beta chains family. In terms of assembly, F-type ATPases have 2 components, CF(1) - the catalytic core - and CF(0) - the membrane proton channel. CF(1) has five subunits: alpha(3), beta(3), gamma(1), delta(1), epsilon(1). CF(0) has three main subunits: a(1), b(2) and c(9-12). The alpha and beta chains form an alternating ring which encloses part of the gamma chain. CF(1) is attached to CF(0) by a central stalk formed by the gamma and epsilon chains, while a peripheral stalk is formed by the delta and b chains.

The protein resides in the cell inner membrane. The catalysed reaction is ATP + H2O + 4 H(+)(in) = ADP + phosphate + 5 H(+)(out). Produces ATP from ADP in the presence of a proton gradient across the membrane. The alpha chain is a regulatory subunit. The sequence is that of ATP synthase subunit alpha from Pseudomonas entomophila (strain L48).